The sequence spans 346 residues: Biotin synthase (346 aa).

The region spanning 38-256 (RQVQVSTLLS…IAVARIMMPT (219 aa)) is the Radical SAM core domain. Residues Cys-53, Cys-57, and Cys-60 each contribute to the [4Fe-4S] cluster site. Residues Cys-97, Cys-128, Cys-188, and Arg-260 each coordinate [2Fe-2S] cluster.

It belongs to the radical SAM superfamily. Biotin synthase family. Homodimer. [4Fe-4S] cluster is required as a cofactor. The cofactor is [2Fe-2S] cluster.

The enzyme catalyses (4R,5S)-dethiobiotin + (sulfur carrier)-SH + 2 reduced [2Fe-2S]-[ferredoxin] + 2 S-adenosyl-L-methionine = (sulfur carrier)-H + biotin + 2 5'-deoxyadenosine + 2 L-methionine + 2 oxidized [2Fe-2S]-[ferredoxin]. The protein operates within cofactor biosynthesis; biotin biosynthesis; biotin from 7,8-diaminononanoate: step 2/2. Its function is as follows. Catalyzes the conversion of dethiobiotin (DTB) to biotin by the insertion of a sulfur atom into dethiobiotin via a radical-based mechanism. The sequence is that of Biotin synthase from Pseudescherichia vulneris (Escherichia vulneris).